Here is a 94-residue protein sequence, read N- to C-terminus: Core protein OPG142 (94 aa).

Belongs to the orthopoxvirus OPG142 family. In terms of assembly, part of a complex composed of the kinase OPG054, OPG092, OPG100, OPG114, OPG115, OPG142 and OPG157.

Its subcellular location is the host cytoplasm. The protein resides in the virion. In terms of biological role, late protein which is a part of a large complex required for early virion morphogenesis. This complex participates in the formation of virosomes and the incorporation of virosomal contents into nascent immature virions. Required for the stability and kinase activity of OPG054. This chain is Core protein OPG142 (OPG142), found in Cynomys gunnisoni (Gunnison's prairie dog).